A 465-amino-acid chain; its full sequence is E3 ubiquitin-protein ligase ORTHRUS-LIKE 1 (465 aa).

Positions 31 to 69 are disordered; sequence TSLSSPLDRSGDVDPLPVSDESGGSKADESMTDADETKK. An RING-type zinc finger spans residues 109–148; the sequence is CSLCNQLPDRPVTILCGHNFCLKCFDKWIDQGNQICATCR. In terms of domain architecture, YDG spans 233–374; the sequence is VRNQGVLVGE…FKVCRYLFVR (142 aa). Residues 442 to 462 form a helical membrane-spanning segment; that stretch reads MAMTCLLLFVLIILVGSSSIL.

It is found in the nucleus. It localises to the membrane. The catalysed reaction is S-ubiquitinyl-[E2 ubiquitin-conjugating enzyme]-L-cysteine + [acceptor protein]-L-lysine = [E2 ubiquitin-conjugating enzyme]-L-cysteine + N(6)-ubiquitinyl-[acceptor protein]-L-lysine.. It participates in protein modification; protein ubiquitination. In terms of biological role, E3 ubiquitin-protein ligase. May participate in methylation-dependent transcriptional regulation. Mediates ubiquitination with the E2 ubiquitin-conjugating enzyme UBC11. This Arabidopsis thaliana (Mouse-ear cress) protein is E3 ubiquitin-protein ligase ORTHRUS-LIKE 1 (ORTHL).